We begin with the raw amino-acid sequence, 413 residues long: MVYLQKQDKEVFDAIKLELGRQRANIELIASENFVSEQVMEAMGSVLTNKYAEGYPGKRYYGGCEFVDIVEDLARDRAKKLFGAEYANVQPHSGAQANMAVYHTVLEPGDTVLGMNLSHGGHLTHGSPVNFSGVLYNFVEYGVREDTKEIDYDIVREAALKHKPKMIVAGASAYPRKIDFAKFREIADEVGAYLMVDMAHIAGLVAAGLHQNPVPYADFTTTTTHKTLRGPRGGMILAKAEWEQKLNKSIFPGIQGGPLMHVIAAKAVAFGEALQPEFTTYCEQIIRNSKKLAETLQANDVAVLTGGSDNHLLLIDLKPLGLTGKAAEKVLDEVGITVNKNTIPFETESPFVTSGIRVGVAAVTTRGFDEVAIEKVGVLISEVLHNLENEEVLADVKARVATLTNEYPLYPSL.

(6S)-5,6,7,8-tetrahydrofolate is bound by residues Leu-117 and Gly-121 to Leu-123. Lys-226 is modified (N6-(pyridoxal phosphate)lysine). Ser-349–Phe-351 lines the (6S)-5,6,7,8-tetrahydrofolate pocket.

Belongs to the SHMT family. As to quaternary structure, homodimer. It depends on pyridoxal 5'-phosphate as a cofactor.

Its subcellular location is the cytoplasm. It catalyses the reaction (6R)-5,10-methylene-5,6,7,8-tetrahydrofolate + glycine + H2O = (6S)-5,6,7,8-tetrahydrofolate + L-serine. It functions in the pathway one-carbon metabolism; tetrahydrofolate interconversion. Its pathway is amino-acid biosynthesis; glycine biosynthesis; glycine from L-serine: step 1/1. Functionally, catalyzes the reversible interconversion of serine and glycine with tetrahydrofolate (THF) serving as the one-carbon carrier. This reaction serves as the major source of one-carbon groups required for the biosynthesis of purines, thymidylate, methionine, and other important biomolecules. Also exhibits THF-independent aldolase activity toward beta-hydroxyamino acids, producing glycine and aldehydes, via a retro-aldol mechanism. The protein is Serine hydroxymethyltransferase of Listeria monocytogenes serovar 1/2a (strain ATCC BAA-679 / EGD-e).